The chain runs to 734 residues: Ribosomal RNA large subunit methyltransferase K/L (734 aa).

A THUMP domain is found at Gln49–Leu167.

Belongs to the methyltransferase superfamily. RlmKL family.

It is found in the cytoplasm. It carries out the reaction guanosine(2445) in 23S rRNA + S-adenosyl-L-methionine = N(2)-methylguanosine(2445) in 23S rRNA + S-adenosyl-L-homocysteine + H(+). The enzyme catalyses guanosine(2069) in 23S rRNA + S-adenosyl-L-methionine = N(2)-methylguanosine(2069) in 23S rRNA + S-adenosyl-L-homocysteine + H(+). Specifically methylates the guanine in position 2445 (m2G2445) and the guanine in position 2069 (m7G2069) of 23S rRNA. This is Ribosomal RNA large subunit methyltransferase K/L from Acinetobacter baylyi (strain ATCC 33305 / BD413 / ADP1).